A 4062-amino-acid chain; its full sequence is Transcription-associated protein 1 (4062 aa).

The interval 531 to 562 (LASEPSTSEDADESGGDPNKLPPPTKEGKKTS) is disordered. 2 TPR repeats span residues 1346-1379 (LDGV…LLDI) and 1677-1714 (RRSF…DDEE). Residues 2659–2670 (VETEMKREEPEP) show a composition bias toward basic and acidic residues. The disordered stretch occupies residues 2659-2692 (VETEMKREEPEPMEVDEKDSQDDSKDAGEPKEKE). Acidic residues predominate over residues 2671–2680 (MEVDEKDSQD). The span at 2681 to 2692 (DSKDAGEPKEKE) shows a compositional bias: basic and acidic residues. The 612-residue stretch at 2800–3411 (LIEFISSKHE…FYHIREAVSV (612 aa)) folds into the FAT domain. One copy of the TPR 3 repeat lies at 2847–2880 (IETLESLGTLYNEISEFDQFAAIWERRAVFPDTM). A PI3K/PI4K catalytic domain is found at 3682 to 4046 (EPNFEIVIKG…DCVSLISRAK (365 aa)). Residues 3688–3694 (VIKGGQV) form a G-loop region. The segment at 3902–3910 (NLTPMGPDQ) is catalytic loop. The activation loop stretch occupies residues 3922–3950 (NPSYRFEIRGGRSLHDIQHFGHEVPFRLT). In terms of domain architecture, FATC spans 4031-4062 (AKLRKDDCVSLISRAKDSDNLARMPPTYHAWF).

This sequence belongs to the PI3/PI4-kinase family. TRA1 subfamily. As to quaternary structure, interacts with histone acetyltransferase Tip60 homolog mys-1. Probably a component of a complex with histone acetyltransferase (HAT) activity, at least composed of mys-1 and trr-1. In terms of tissue distribution, expressed in germ cells and somatic cells.

Its subcellular location is the nucleus. The protein localises to the chromosome. Influences germ cell fate in hermaphrodites. Acts downstream of tra-2 and tra-3 and through the Tip60 histone acetyltransferase complex to regulate germ cell fate decisions. Required for spermatogenesis and embryonic development. Acts with tra-2 to promote expression of fog-3 and control male tail development. Involved in the negative regulation of vulval development. Involved in the positive regulation of transcription factor daf-16, probably acting by histone acetylation; thereby modulating stress resistance. Plays a role in acetylation of nucleosomal histone H4, probably acting as a component of the Tip60 histone acetyltransferase complex. In Caenorhabditis elegans, this protein is Transcription-associated protein 1.